The following is a 392-amino-acid chain: ADP-ribosylhydrolase ARH1 (392 aa).

3 residues coordinate Mg(2+): Ser-79, Asp-80, and Asp-81. Position 109 (Lys-109) interacts with substrate. The segment at 125–127 is substrate; that stretch reads IQT. Gly-159 is a binding site for substrate. Substrate regions lie at residues 192 to 194, 309 to 311, and 315 to 316; these read HNN, FSG, and SS. Mg(2+)-binding residues include Asp-348, Asp-350, and Ser-351.

The protein belongs to the ADP-ribosylglycohydrolase family. In terms of assembly, monomer. Mg(2+) is required as a cofactor.

The enzyme catalyses N(omega)-(ADP-D-ribosyl)-L-arginyl-[protein] + H2O = ADP-D-ribose + L-arginyl-[protein]. Its function is as follows. Specifically acts as an arginine mono-ADP-ribosylhydrolase by mediating the removal of mono-ADP-ribose attached to arginine residues on proteins. This is ADP-ribosylhydrolase ARH1 (adprh) from Dictyostelium discoideum (Social amoeba).